Here is a 370-residue protein sequence, read N- to C-terminus: Immunoglobulin superfamily member 5 (370 aa).

The signal sequence occupies residues 1-24 (MEGSWRDVLAVLVILAQLTASGSS). 2 Ig-like V-type domains span residues 25 to 125 (YQII…LSVQ) and 128 to 215 (GTLN…KSLT). Topologically, residues 25–239 (YQIIEGPQNV…EEGPALPTWA (215 aa)) are extracellular. N-linked (GlcNAc...) asparagine glycosylation is found at Asn-33 and Asn-45. An intrachain disulfide couples Cys-46 to Cys-109. Residues Asn-146, Asn-196, and Asn-217 are each glycosylated (N-linked (GlcNAc...) asparagine). The cysteines at positions 149 and 201 are disulfide-linked. A helical membrane pass occupies residues 240–260 (IILLAVAFSLLLILIIVLIII). Topologically, residues 261–370 (FCCCCASRRE…PQKVRNVTLV (110 aa)) are cytoplasmic. The disordered stretch occupies residues 284 to 359 (ANMRTNKADP…THPRVSFDIA (76 aa)). The span at 289–301 (NKADPETKLKGGK) shows a compositional bias: basic and acidic residues.

This sequence belongs to the immunoglobulin superfamily. In terms of assembly, interacts with MAGI1 at tight junctions, forms a tripartite complex with NPHS1. Interacts with LNX1 isoform 2 via its PDZ 2 domain, it may also interact with other isoforms containing this domain. In terms of processing, N-glycosylated. In terms of tissue distribution, localized to kidney glomeruli and small intestinal epithelial cells. In kidney glomeruli, it is localized at slit diaphragm. Also found in spermatogonia, gonocytes, hematopoietic stem cells and Sertoli cells.

The protein resides in the apical cell membrane. The protein localises to the cell junction. Its subcellular location is the tight junction. Provides, together with MAGI1, an adhesion machinery at tight junctions, which may regulate the permeability of kidney glomerulus and small intestinal epithelial cells. Mediates calcium-independent homophilic cell adhesion. In testis, it may function as a cell adhesion molecule rather than a tight-junction protein. It may participate in the adhesion between spermatogonia-spermatogonia, spermatogonia-Sertoli cells, and Sertoli cells-Sertoli cells. This Mus musculus (Mouse) protein is Immunoglobulin superfamily member 5 (Igsf5).